The primary structure comprises 289 residues: UPF0276 protein BP2925 (289 aa).

It belongs to the UPF0276 family.

The sequence is that of UPF0276 protein BP2925 from Bordetella pertussis (strain Tohama I / ATCC BAA-589 / NCTC 13251).